Consider the following 291-residue polypeptide: MACLSPSQLKKFQEDGFLLLEGFFTADECVVMQQRIGEIVAEMDVPLHCRTEFSTQEDEQLQTQGNTDYFLSSGDKIRFFFEKGVFDEKGNFLVPPEKSINKIGHALHAHDPVFRSITHSPKVQALVRSLGLQIPVVVQSMYIFKQPHFGGEVSPHQDATFLYTEPLGRVLGLWIATEDAMLENGCLWFIPGSHTSGVSRRMIRAPSDSGPGTSFLGSEPAWDNNLFVPLPVRRGGLVLIHGEVVHKSEQNLSDHSRQAYTFHLMEAAGTVWSPGNWLQPTTELPFPPLYI.

Thr55 is subject to Phosphothreonine. 2-oxoglutarate is bound by residues Lys102, Met141, His156–Asp158, and Trp174. Residues His156 and Asp158 each coordinate Fe cation. His246 contacts Fe cation. 2-oxoglutarate is bound by residues Ser248 and Arg257.

It belongs to the PhyH family. PHYHD1 subfamily. It depends on Fe cation as a cofactor.

In terms of biological role, 2-oxoglutarate(2OG)-dependent dioxygenase that catalyzes the conversion of 2-oxoglutarate to succinate and CO(2) in an iron-dependent manner. However, does not couple 2OG turnover to the hydroxylation of acyl-coenzyme A derivatives, implying that it is not directly involved in phytanoyl coenzyme-A metabolism. Does not show detectable activity towards fatty acid CoA thioesters. The sequence is that of Phytanoyl-CoA dioxygenase domain-containing protein 1 (Phyhd1) from Rattus norvegicus (Rat).